Consider the following 453-residue polypeptide: Membrane-bound acylglycerophosphatidylinositol O-acyltransferase mboa-7 (453 aa).

7 helical membrane-spanning segments follow: residues 4-24 (ILGL…FSFG), 36-56 (ILAS…PKIV), 79-99 (LYVF…HYIL), 154-174 (AYFY…QMLI), 195-215 (VRLL…PLDI), 220-240 (AIWE…FVVF), and 244-264 (VYSA…GIYP). Residue Asn319 is glycosylated (N-linked (GlcNAc...) asparagine). Residue His350 is part of the active site. 2 consecutive transmembrane segments (helical) span residues 354–374 (AGYF…DVIF) and 421–441 (FWSS…IYSA).

The protein belongs to the membrane-bound acyltransferase family. Expressed ubiquitously throughout development from early embryo to larval and adult stages. In adults, strongly expressed in pharyngeal muscle, body wall muscle, vulval cells, distal tip cells, intestinal cells and spermatheca.

Its subcellular location is the membrane. The enzyme catalyses 1-octadecanoyl-sn-glycero-3-phospho-(1D-myo-inositol) + (5Z,8Z,11Z,14Z,17Z)-eicosapentaenoyl-CoA = 1-octadecanoyl-2-(5Z,8Z,11Z,14Z,17Z-eicosapentaenoyl)-sn-glycero-3-phospho-(1D-myo-inositol) + CoA. It catalyses the reaction a 1-acyl-sn-glycero-3-phospho-(1D-myo-inositol) + (5Z,8Z,11Z,14Z,17Z)-eicosapentaenoyl-CoA = a 1-acyl-2-(5Z,8Z,11Z,14Z,17Z-eicosapentaenoyl)-sn-glycero-3-phospho-(1D-myo-inositol) + CoA. It carries out the reaction a 1-acyl-sn-glycero-3-phospho-(1D-myo-inositol) + (5Z,8Z,11Z,14Z)-eicosatetraenoyl-CoA = a 1-acyl-2-(5Z,8Z,11Z,14Z-eicosatetraenoyl)-sn-glycero-3-phospho-(1D-myo-inositol) + CoA. Its pathway is lipid metabolism; phospholipid metabolism. Its function is as follows. Acyltransferase which mediates the conversion of lysophosphatidylinositol (1-acyl-sn-glycero-3-phosphatidylinositol or LPI) into phosphatidylinositol (1,2-diacyl-sn-glycero-3-phosphoinositol or PI) (LPIAT activity). Prefers sn-2-LPI rather than sn-1-LPI as the acyl acceptor. Lysophospholipid acyltransferases (LPLATs) catalyze the reacylation step of the phospholipid remodeling pathway also known as the Lands cycle. Involved in the selective incorporation of arachidonoyl-CoA ((5Z,8Z,11Z,14Z)-eicosatetraenoyl-CoA) and (5Z,8Z,11Z,14Z,17Z)-eicosapentaenoyl-CoA (EPA-CoA) into PI. Besides its role in biomembranes, PI is a precursor of PI 3-phosphate (PIP3) and its fatty acid composition has an important role in PI3P signaling. The polypeptide is Membrane-bound acylglycerophosphatidylinositol O-acyltransferase mboa-7 (Caenorhabditis elegans).